The chain runs to 377 residues: Chaperone protein DnaJ (377 aa).

A J domain is found at 5 to 70 (DYYEILGVSR…QKRAAYDQYG (66 aa)). The CR-type zinc-finger motif lies at 132–210 (GVTKEIRIPT…CHGHGRIEKS (79 aa)). Residues Cys-145, Cys-148, Cys-162, Cys-165, Cys-184, Cys-187, Cys-198, and Cys-201 each coordinate Zn(2+). CXXCXGXG motif repeat units lie at residues 145-152 (CDVCHGSG), 162-169 (CPTCHGAG), 184-191 (CPHCHGRG), and 198-205 (CNKCHGHG).

Belongs to the DnaJ family. In terms of assembly, homodimer. Zn(2+) is required as a cofactor.

It is found in the cytoplasm. Participates actively in the response to hyperosmotic and heat shock by preventing the aggregation of stress-denatured proteins and by disaggregating proteins, also in an autonomous, DnaK-independent fashion. Unfolded proteins bind initially to DnaJ; upon interaction with the DnaJ-bound protein, DnaK hydrolyzes its bound ATP, resulting in the formation of a stable complex. GrpE releases ADP from DnaK; ATP binding to DnaK triggers the release of the substrate protein, thus completing the reaction cycle. Several rounds of ATP-dependent interactions between DnaJ, DnaK and GrpE are required for fully efficient folding. Also involved, together with DnaK and GrpE, in the DNA replication of plasmids through activation of initiation proteins. In Edwardsiella ictaluri (strain 93-146), this protein is Chaperone protein DnaJ.